We begin with the raw amino-acid sequence, 623 residues long: Aspartate--tRNA(Asp/Asn) ligase (623 aa).

E175 serves as a coordination point for L-aspartate. Residues 199–202 are aspartate; the sequence is QQYK. Residues R221 and H483 each contribute to the L-aspartate site. 221-223 provides a ligand contact to ATP; the sequence is RDE. ATP is bound at residue E517. An L-aspartate-binding site is contributed by R524. 569–572 contacts ATP; the sequence is GVDR.

It belongs to the class-II aminoacyl-tRNA synthetase family. Type 1 subfamily. In terms of assembly, homodimer.

The protein localises to the cytoplasm. The enzyme catalyses tRNA(Asx) + L-aspartate + ATP = L-aspartyl-tRNA(Asx) + AMP + diphosphate. Functionally, aspartyl-tRNA synthetase with relaxed tRNA specificity since it is able to aspartylate not only its cognate tRNA(Asp) but also tRNA(Asn). Reaction proceeds in two steps: L-aspartate is first activated by ATP to form Asp-AMP and then transferred to the acceptor end of tRNA(Asp/Asn). The sequence is that of Aspartate--tRNA(Asp/Asn) ligase from Xanthobacter autotrophicus (strain ATCC BAA-1158 / Py2).